The chain runs to 132 residues: Small ribosomal subunit protein uS8 (132 aa).

This sequence belongs to the universal ribosomal protein uS8 family. Part of the 30S ribosomal subunit. Contacts proteins S5 and S12.

One of the primary rRNA binding proteins, it binds directly to 16S rRNA central domain where it helps coordinate assembly of the platform of the 30S subunit. The polypeptide is Small ribosomal subunit protein uS8 (Streptomyces griseus subsp. griseus (strain JCM 4626 / CBS 651.72 / NBRC 13350 / KCC S-0626 / ISP 5235)).